The following is an 844-amino-acid chain: RNA-directed RNA polymerase (844 aa).

248–255 (GLPYIGKT) lines the GTP pocket. The RdRp catalytic domain maps to 384-588 (MIYADNIYIL…ENERLIASVA (205 aa)). The disordered stretch occupies residues 820–844 (EFSEKIPLTPTQKKNAKRREKQRRN). Positions 833 to 844 (KNAKRREKQRRN) are enriched in basic residues.

As to quaternary structure, interacts with VP3 in the cytoplasm. Post-translationally, exists in multiple phosphorylated forms.

The protein localises to the virion. The enzyme catalyses RNA(n) + a ribonucleoside 5'-triphosphate = RNA(n+1) + diphosphate. RNA-dependent RNA polymerase which is found both free and covalently attached to the genomic RNA. May also contain guanylyl and methyl transferase activities. This Infectious pancreatic necrosis virus (strain Sp) (IPNV) protein is RNA-directed RNA polymerase (VP1).